We begin with the raw amino-acid sequence, 405 residues long: Probable tRNA sulfurtransferase (405 aa).

In terms of domain architecture, THUMP spans 60–165 (TAVMDRLKGV…LNGVFLSGQT (106 aa)). ATP is bound by residues 183–184 (ML), 208–209 (HF), Arg265, Gly287, and Gln296.

Belongs to the ThiI family.

The protein resides in the cytoplasm. It catalyses the reaction [ThiI sulfur-carrier protein]-S-sulfanyl-L-cysteine + a uridine in tRNA + 2 reduced [2Fe-2S]-[ferredoxin] + ATP + H(+) = [ThiI sulfur-carrier protein]-L-cysteine + a 4-thiouridine in tRNA + 2 oxidized [2Fe-2S]-[ferredoxin] + AMP + diphosphate. The enzyme catalyses [ThiS sulfur-carrier protein]-C-terminal Gly-Gly-AMP + S-sulfanyl-L-cysteinyl-[cysteine desulfurase] + AH2 = [ThiS sulfur-carrier protein]-C-terminal-Gly-aminoethanethioate + L-cysteinyl-[cysteine desulfurase] + A + AMP + 2 H(+). Its pathway is cofactor biosynthesis; thiamine diphosphate biosynthesis. Its function is as follows. Catalyzes the ATP-dependent transfer of a sulfur to tRNA to produce 4-thiouridine in position 8 of tRNAs, which functions as a near-UV photosensor. Also catalyzes the transfer of sulfur to the sulfur carrier protein ThiS, forming ThiS-thiocarboxylate. This is a step in the synthesis of thiazole, in the thiamine biosynthesis pathway. The sulfur is donated as persulfide by IscS. This Levilactobacillus brevis (strain ATCC 367 / BCRC 12310 / CIP 105137 / JCM 1170 / LMG 11437 / NCIMB 947 / NCTC 947) (Lactobacillus brevis) protein is Probable tRNA sulfurtransferase.